Reading from the N-terminus, the 328-residue chain is Beta-ketoacyl-[acyl-carrier-protein] synthase III (328 aa).

Residues cysteine 122 and histidine 255 contribute to the active site. The tract at residues 256-260 is ACP-binding; that stretch reads QANIR. Asparagine 285 is an active-site residue.

The protein belongs to the thiolase-like superfamily. FabH family. As to quaternary structure, homodimer.

Its subcellular location is the cytoplasm. It carries out the reaction malonyl-[ACP] + acetyl-CoA + H(+) = 3-oxobutanoyl-[ACP] + CO2 + CoA. It participates in lipid metabolism; fatty acid biosynthesis. Its function is as follows. Catalyzes the condensation reaction of fatty acid synthesis by the addition to an acyl acceptor of two carbons from malonyl-ACP. Catalyzes the first condensation reaction which initiates fatty acid synthesis and may therefore play a role in governing the total rate of fatty acid production. Possesses both acetoacetyl-ACP synthase and acetyl transacylase activities. Its substrate specificity determines the biosynthesis of branched-chain and/or straight-chain of fatty acids. This Polynucleobacter necessarius subsp. necessarius (strain STIR1) protein is Beta-ketoacyl-[acyl-carrier-protein] synthase III.